Reading from the N-terminus, the 125-residue chain is uncharacterized protein (125 aa).

Belongs to the asfivirus H124R family.

The protein localises to the virion. This is an uncharacterized protein from Ornithodoros (relapsing fever ticks).